Consider the following 229-residue polypeptide: Nectarin-1 (229 aa).

Residues 1–32 form the signal peptide; it reads MAAFGINSKIFQSMEMAILFLLAISIDRYCFA. Cys42 and Cys57 are joined by a disulfide. N-linked (GlcNAc...) asparagine glycosylation occurs at Asn60. The Cupin type-1 domain occupies 69 to 217; sequence LAISKPGATN…TFQINTEDVQ (149 aa). 4 residues coordinate Mn(2+): His117, His119, Glu124, and His163.

Monomer. In the absence of manganese, it forms tetrameric and pentameric forms which show superoxide dismutase activity. Mn(2+) serves as cofactor. Nectary tissues and to a lower level ovary. Not detected in petals, stems, leaves, roots or other floral tissues.

It is found in the secreted. It localises to the extracellular space. Its subcellular location is the apoplast. It catalyses the reaction 2 superoxide + 2 H(+) = H2O2 + O2. Functionally, may interact with bacterial adhesins thereby protecting the reproductive tissues from microbial attack. Has no oxalate oxidase activity. The protein is Nectarin-1 (NECI) of Nicotiana langsdorffii x Nicotiana sanderae (Ornamental tobacco).